Reading from the N-terminus, the 233-residue chain is Transcriptional regulatory protein PrrA (233 aa).

Residues 9-123 (RVLVVDDDSD…ELVARVKALL (115 aa)) enclose the Response regulatory domain. D58 carries the post-translational modification 4-aspartylphosphate. Positions 134–232 (SETIAVGPLE…VRGVGFVLRM (99 aa)) form a DNA-binding region, ompR/PhoB-type.

Phosphorylated by PrrB at Asp-58.

The protein resides in the cytoplasm. Functionally, member of the two-component regulatory system PrrB/PrrA that is involved specifically in early intracellular multiplication of Mycobacterium and is essential for its viability. Upon phosphorylation by PrrB, functions as a transcription regulator by direct binding to promoter regions of target genes to positively regulate their expression. Autoregulates its own expression. The sequence is that of Transcriptional regulatory protein PrrA (prrA) from Mycobacterium leprae (strain TN).